Consider the following 292-residue polypeptide: Elongation factor Ts (292 aa).

The involved in Mg(2+) ion dislocation from EF-Tu stretch occupies residues Thr80–Val83.

Belongs to the EF-Ts family.

It localises to the cytoplasm. In terms of biological role, associates with the EF-Tu.GDP complex and induces the exchange of GDP to GTP. It remains bound to the aminoacyl-tRNA.EF-Tu.GTP complex up to the GTP hydrolysis stage on the ribosome. The sequence is that of Elongation factor Ts from Oenococcus oeni (strain ATCC BAA-331 / PSU-1).